The primary structure comprises 410 residues: Serine/threonine transporter SstT (410 aa).

A run of 10 helical transmembrane segments spans residues 15 to 35 (GSLV…AWLS), 49 to 69 (FVNA…ISSI), 82 to 102 (PIVM…VVAS), 118 to 138 (IVPP…MVTN), 142 to 162 (AVMK…GFAF), 190 to 210 (FAPV…GFDA), 217 to 237 (LLGL…PLLV), 299 to 319 (MAGA…TLGI), 331 to 351 (LVAS…LLLI), and 358 to 378 (FGIP…IGVL).

This sequence belongs to the dicarboxylate/amino acid:cation symporter (DAACS) (TC 2.A.23) family.

The protein resides in the cell inner membrane. The enzyme catalyses L-serine(in) + Na(+)(in) = L-serine(out) + Na(+)(out). The catalysed reaction is L-threonine(in) + Na(+)(in) = L-threonine(out) + Na(+)(out). In terms of biological role, involved in the import of serine and threonine into the cell, with the concomitant import of sodium (symport system). The polypeptide is Serine/threonine transporter SstT (Erwinia tasmaniensis (strain DSM 17950 / CFBP 7177 / CIP 109463 / NCPPB 4357 / Et1/99)).